The primary structure comprises 303 residues: Movement protein (303 aa).

Positions 1-18 are enriched in polar residues; sequence MSNIVSPFSGSSRTTSDV. 2 disordered regions span residues 1-24 and 267-303; these read MSNI…QAGG and EESE…LRIK.

This sequence belongs to the bromovirus movement protein family. Post-translationally, phosphorylated by host.

Its subcellular location is the host cell junction. The protein resides in the host plasmodesma. Functionally, transports viral genome to neighboring plant cells directly through plasmosdesmata, without any budding. The movement protein allows efficient cell to cell propagation, by bypassing the host cell wall barrier. Acts by forming a tubular structure at the host plasmodesmata, enlarging it enough to allow free passage of virion capsids. The sequence is that of Movement protein from Brome mosaic virus (BMV).